We begin with the raw amino-acid sequence, 205 residues long: Protein DEPP1 (205 aa).

Polar residues-rich tracts occupy residues 55–64 (DKVTAQSRPN) and 83–101 (GDSSLCVSSLQPTLPSPGT). The segment at 55–171 (DKVTAQSRPN…RHQTSDLKSW (117 aa)) is disordered. Positions 138 to 155 (MGKDTGRLCEARVPEHSL) are enriched in basic and acidic residues.

The protein resides in the cytoplasm. The protein localises to the peroxisome. It localises to the mitochondrion. Its function is as follows. Acts as a critical modulator of FOXO3-induced autophagy via increased cellular ROS. The protein is Protein DEPP1 (Depp1) of Mus musculus (Mouse).